The primary structure comprises 410 residues: Dipeptidase ataJ (410 aa).

Residues His27, Asp29, and Glu138 each coordinate Zn(2+). His165 contributes to the substrate binding site. A disordered region spans residues 180 to 200; that stretch reads TSSPWSEYGGQTHDPGDEPSR. Substrate contacts are provided by Arg258 and Asp318.

This sequence belongs to the metallo-dependent hydrolases superfamily. Peptidase M19 family. Requires Zn(2+) as cofactor.

It carries out the reaction an L-aminoacyl-L-amino acid + H2O = 2 an L-alpha-amino acid. It functions in the pathway mycotoxin biosynthesis. Functionally, dipeptidase; part of the gene cluster that mediates the biosynthesis of acetylaranotin, a member of the epipolythiodioxopiperazine (ETP) class of toxins characterized by a disulfide-bridged cyclic dipeptide. The first step of acetylaranotin biosynthesis is performed by the NRPS ataP which produces diketopiperazine cyclo-L-Phe-L-Phe via the condensation of 2 phenylalanines (L-Phe). The ataC domain of ataTC then catalyzes the formation of bishydroxylation of cyclo-L-Phe-L-Phe. The glutathione S-transferase domain ataG in ataIMG further catalyzes the conjugation of two glutathiones to the bishydroxylated intermediate. Next, the dipeptidase ataJ removes the Glu residues. The following step is performed by the carbon sulfur lyase domain ataI of ataIMG which may convert the bis-cysteinyl adduct to yield an epidithiol intermediate. The ataT domain from ataTC then catalyzes the oxidation of the free dithiols, followed by a cyclization step catalyzed by the cytochrome P450 ataF. AtaF probably acts as an epoxidase to promote a dual epoxidation formation at C8 and C9 along with C8' and C9', followed by the spontaneous nucleophilic attack of the amide nitrogens N10 and N10' to yield an intermediate with the pyrrolidine partial structure. The final steps of acetylaranotin biosynthesis involve the acetylation and ring rearrangement of an epitetrathiodiketopiperazine intermediate to produce acetylaranotin. AtaH probably catalyzes the acetylation of epitetrathiodiketopiperazine to produce a diacetate and ataY is responsible for the formation of the dihydrooxepin moiety that converts the diacetate intermediate to acetylaranotin via acetylapoaranotin. Both enzymes could function independently in the absence of the other. The acetylaranotin bis-thiomethyltransferase ataS located outside of acetylaranotin gene cluster is the main thiomethyltransferase responsible for converting acetylaranotin and its related intermediates to their methylated forms. This chain is Dipeptidase ataJ, found in Aspergillus terreus (strain NIH 2624 / FGSC A1156).